A 506-amino-acid chain; its full sequence is Xaa-Pro aminopeptidase 3 (506 aa).

A mitochondrion-targeting transit peptide spans 1–31 (MPSLLSTPKLAPVLARLRGLSGCMSCLQRRY). The interaction with TNFRSF1B stretch occupies residues 54–79 (HPHLLRPGEVTPGLSQVEYALRRHKL). Positions 300, 331, 342, 423, 430, 450, and 474 each coordinate substrate. Residues Asp-331, Asp-342, and His-423 each contribute to the Mn(2+) site. Mn(2+)-binding residues include Glu-450 and Glu-474.

This sequence belongs to the peptidase M24B family. In terms of assembly, homodimer. Interacts with TNFRSF1B/TNFR2 (activated) and TRAF2. Requires Mn(2+) as cofactor. Expressed in brain, kidney, heart, liver, skeletal muscle and testis.

It localises to the mitochondrion. The protein resides in the cytoplasm. It catalyses the reaction Release of any N-terminal amino acid, including proline, that is linked to proline, even from a dipeptide or tripeptide.. In terms of biological role, catalyzes the removal of a penultimate prolyl residue from the N-termini of peptides, such as Leu-Pro-Ala. Also shows low activity towards peptides with Ala or Ser at the P1 position. Promotes TNFRSF1B-mediated phosphorylation of MAPK8/JNK1 and MAPK9/JNK2, suggesting a function as an adapter protein for TNFRSF1B; the effect is independent of XPNPEP3 peptidase activity. May inhibit apoptotic cell death induced via TNF-TNFRSF1B signaling. This is Xaa-Pro aminopeptidase 3 (Xpnpep3) from Mus musculus (Mouse).